Here is a 387-residue protein sequence, read N- to C-terminus: GTPase Obg (387 aa).

Positions 1–159 (MKFLDEAKIY…MWVRLEMKLL (159 aa)) constitute an Obg domain. The OBG-type G domain occupies 160 to 334 (ADVGLVGMPN…LVYHVGGMVK (175 aa)). Residues 166–173 (GMPNAGKS), 191–195 (FTTLQ), 213–216 (DIPG), 283–286 (SKAD), and 315–317 (SSA) contribute to the GTP site. Residues Ser-173 and Thr-193 each coordinate Mg(2+). Residues 347–379 (LEDAPTRAGSKALRDEHAPSWQDDDDDDDDDDG) form a disordered region. Residues 368 to 379 (QDDDDDDDDDDG) are compositionally biased toward acidic residues.

Belongs to the TRAFAC class OBG-HflX-like GTPase superfamily. OBG GTPase family. Monomer. It depends on Mg(2+) as a cofactor.

It is found in the cytoplasm. In terms of biological role, an essential GTPase which binds GTP, GDP and possibly (p)ppGpp with moderate affinity, with high nucleotide exchange rates and a fairly low GTP hydrolysis rate. Plays a role in control of the cell cycle, stress response, ribosome biogenesis and in those bacteria that undergo differentiation, in morphogenesis control. The sequence is that of GTPase Obg from Magnetococcus marinus (strain ATCC BAA-1437 / JCM 17883 / MC-1).